A 211-amino-acid polypeptide reads, in one-letter code: Probable endo-1,4-beta-xylanase 5 (211 aa).

The signal sequence occupies residues 1 to 16 (MKVTAAFASLLLTAFA). In terms of domain architecture, GH11 spans 19–210 (APEPVLVSRS…GAGSASVTIS (192 aa)). Residue Glu-106 is the Nucleophile of the active site. Glu-197 serves as the catalytic Proton donor.

This sequence belongs to the glycosyl hydrolase 11 (cellulase G) family.

It is found in the secreted. It catalyses the reaction Endohydrolysis of (1-&gt;4)-beta-D-xylosidic linkages in xylans.. The protein operates within glycan degradation; xylan degradation. In terms of biological role, endo-1,4-beta-xylanase involved in the hydrolysis of xylan, a major structural heterogeneous polysaccharide found in plant biomass representing the second most abundant polysaccharide in the biosphere, after cellulose. The protein is Probable endo-1,4-beta-xylanase 5 (XYN5) of Aspergillus niger (strain ATCC MYA-4892 / CBS 513.88 / FGSC A1513).